A 280-amino-acid chain; its full sequence is Phosphonoacetaldehyde hydrolase (280 aa).

Asp-20 acts as the Nucleophile in catalysis. Positions 20 and 22 each coordinate Mg(2+). Lys-61 acts as the Schiff-base intermediate with substrate in catalysis. Position 194 (Asp-194) interacts with Mg(2+).

Belongs to the HAD-like hydrolase superfamily. PhnX family. Homodimer. The cofactor is Mg(2+).

The enzyme catalyses phosphonoacetaldehyde + H2O = acetaldehyde + phosphate + H(+). Involved in phosphonate degradation. This is Phosphonoacetaldehyde hydrolase from Nitratidesulfovibrio vulgaris (strain DSM 19637 / Miyazaki F) (Desulfovibrio vulgaris).